The sequence spans 341 residues: Protein pelota homolog (341 aa).

It belongs to the eukaryotic release factor 1 family. Pelota subfamily. Monomer. It depends on a divalent metal cation as a cofactor.

The protein resides in the cytoplasm. May function in recognizing stalled ribosomes, interact with stem-loop structures in stalled mRNA molecules, and effect endonucleolytic cleavage of the mRNA. May play a role in the release non-functional ribosomes and degradation of damaged mRNAs. Has endoribonuclease activity. This is Protein pelota homolog from Methanoregula boonei (strain DSM 21154 / JCM 14090 / 6A8).